The primary structure comprises 375 residues: 23S rRNA (uracil(747)-C(5))-methyltransferase RlmC (375 aa).

[4Fe-4S] cluster is bound by residues Cys3, Cys11, Cys14, and Cys87. S-adenosyl-L-methionine is bound by residues Gln212, Phe241, Glu262, and Asn307. The active-site Nucleophile is Cys334.

It belongs to the class I-like SAM-binding methyltransferase superfamily. RNA M5U methyltransferase family. RlmC subfamily.

The enzyme catalyses uridine(747) in 23S rRNA + S-adenosyl-L-methionine = 5-methyluridine(747) in 23S rRNA + S-adenosyl-L-homocysteine + H(+). Functionally, catalyzes the formation of 5-methyl-uridine at position 747 (m5U747) in 23S rRNA. The chain is 23S rRNA (uracil(747)-C(5))-methyltransferase RlmC from Escherichia coli O7:K1 (strain IAI39 / ExPEC).